Here is a 103-residue protein sequence, read N- to C-terminus: Large ribosomal subunit protein uL24 (103 aa).

It belongs to the universal ribosomal protein uL24 family. As to quaternary structure, part of the 50S ribosomal subunit.

Its function is as follows. One of two assembly initiator proteins, it binds directly to the 5'-end of the 23S rRNA, where it nucleates assembly of the 50S subunit. Functionally, one of the proteins that surrounds the polypeptide exit tunnel on the outside of the subunit. This is Large ribosomal subunit protein uL24 from Pasteurella multocida (strain Pm70).